We begin with the raw amino-acid sequence, 559 residues long: Sporulation protein kinase mde3 (559 aa).

Residues 21-323 (YLVKQKLGDG…TAKYCKEVFF (303 aa)) enclose the Protein kinase domain. ATP is bound by residues 27 to 35 (LGDGSFGTV) and Lys53. Asp150 acts as the Proton acceptor in catalysis.

It belongs to the protein kinase superfamily. Ser/Thr protein kinase family.

The enzyme catalyses L-seryl-[protein] + ATP = O-phospho-L-seryl-[protein] + ADP + H(+). It carries out the reaction L-threonyl-[protein] + ATP = O-phospho-L-threonyl-[protein] + ADP + H(+). Functionally, protein kinase which is essential for spore formation. In Schizosaccharomyces pombe (strain 972 / ATCC 24843) (Fission yeast), this protein is Sporulation protein kinase mde3 (mde3).